We begin with the raw amino-acid sequence, 826 residues long: MGKKRTKGKTVPIDDSSETLEPMCRHIRKGLEQGNLKKALVNVEWNICQDCKTDNKVKDKAEEETEEKPSVWLCLKCGHQGCGRNSQEQHALKHYLTPRSEPHCLVLSLDNWSVWCYICDNEVQYCSSNQLGQVVDYVRKQASITTPKPAEKDNGNIELENKKLEKESKNEQEREKKENMAKENPPMNSPSQITVKGLSNLGNTCFFNAVMQNLSQTPVLRELLKEVKMSGTIVKIEPPDLALTEPLEINLEPPGPLTLAMSQFLNEMQETKKGIVTPKELFSQVCKKAVRFKGYQQQDSQELLRYLLDGMRAEEHQRVSKGILKAFGNSTEKLDEELKNKVKDYEKKKSIPSFVDRIFGGELTSTIMCDQCRTVSLVHESFLDLSLPVLDDQSGKKSVNDKNLKKTMEDEDQDSEEEKDNDSYIKERSDIPSGTSKHLQKKAKKQAKKQAKNQRRQQKIQGKVLHLNDICTIDHPEDNEYEAEMSLQGEVNIKSNHISQEGVMHKEYCVNQKDLNGQEKMIESVTDNQKPTEEVDMKNINMDNDLEVLTSSPTECTRNLNGAYLTEASNGEVDISNGFKNLNLNAALHPDEINIEILNDSHTPGTKVYEVVNEDPETAFCTLANREVFNTDECSIQHCLYQFTRNEKLRDANKLLCEVCTRRQCNGPKANMKGERKHVYTNAKKQMLISLAPPVLTLHLKRFQQAGFNLRKVNKHIKFPEILDLAPFCTLKCKNVAEENTRVLYSLYGVVEHSGTMRSGHYTAYAKARTANSHLSNLVLHGDIPQDFEMESKGQWFHISDTHVQAVPTTKVLNSQAYLLFYERIL.

The segment at 22–142 adopts a UBP-type zinc-finger fold; that stretch reads PMCRHIRKGL…QVVDYVRKQA (121 aa). Zn(2+)-binding residues include Cys24, His26, Cys48, Cys51, Cys74, Cys77, Cys82, His90, His94, His103, Cys116, and Cys119. Lys140 participates in a covalent cross-link: Glycyl lysine isopeptide (Lys-Gly) (interchain with G-Cter in SUMO2). Residues 146–190 form a disordered region; that stretch reads TPKPAEKDNGNIELENKKLEKESKNEQEREKKENMAKENPPMNSP. Basic and acidic residues predominate over residues 149 to 181; the sequence is PAEKDNGNIELENKKLEKESKNEQEREKKENMA. Ser189 is modified (phosphoserine). The USP domain maps to 196 to 825; it reads KGLSNLGNTC…QAYLLFYERI (630 aa). Residue Cys205 is the Nucleophile of the active site. Basic and acidic residues predominate over residues 394 to 408; that stretch reads SGKKSVNDKNLKKTM. Positions 394–460 are disordered; the sequence is SGKKSVNDKN…AKNQRRQQKI (67 aa). The span at 409–420 shows a compositional bias: acidic residues; that stretch reads EDEDQDSEEEKD. A Phosphoserine modification is found at Ser415. Residues 421–430 are compositionally biased toward basic and acidic residues; that stretch reads NDSYIKERSD. Residues 438–458 are compositionally biased toward basic residues; that stretch reads HLQKKAKKQAKKQAKNQRRQQ. A Phosphoserine modification is found at Ser552. Thr557 is modified (phosphothreonine). His761 functions as the Proton acceptor in the catalytic mechanism.

The protein belongs to the peptidase C19 family. USP16 subfamily. In terms of assembly, homotetramer. Associates with late pre-40S ribosomes. Interacts with CEP78; promoting deubiquitination of tektins. Post-translationally, phosphorylated at the onset of mitosis and dephosphorylated during the metaphase/anaphase transition. Phosphorylation by AURKB enhances the deubiquitinase activity.

It is found in the nucleus. The enzyme catalyses Thiol-dependent hydrolysis of ester, thioester, amide, peptide and isopeptide bonds formed by the C-terminal Gly of ubiquitin (a 76-residue protein attached to proteins as an intracellular targeting signal).. Functionally, specifically deubiquitinates 'Lys-120' of histone H2A (H2AK119Ub), a specific tag for epigenetic transcriptional repression, thereby acting as a coactivator. Deubiquitination of histone H2A is a prerequisite for subsequent phosphorylation at 'Ser-11' of histone H3 (H3S10ph), and is required for chromosome segregation when cells enter into mitosis. In resting B- and T-lymphocytes, phosphorylation by AURKB leads to enhance its activity, thereby maintaining transcription in resting lymphocytes. Regulates Hox gene expression via histone H2A deubiquitination. Prefers nucleosomal substrates. Does not deubiquitinate histone H2B. Also deubiquitinates non-histone proteins, such as ribosomal protein RPS27A: deubiquitination of monoubiquitinated RPS27A promotes maturation of the 40S ribosomal subunit. Also mediates deubiquitination of tektin proteins (TEKT1, TEKT2, TEK3, TEKT4 and TEKT5), promoting their stability. This is Ubiquitin carboxyl-terminal hydrolase 16 from Macaca fascicularis (Crab-eating macaque).